The following is an 859-amino-acid chain: Leucine--tRNA ligase (859 aa).

Residues 42 to 52 carry the 'HIGH' region motif; that stretch reads PYPSGRLHMGH. The 'KMSKS' region motif lies at 618-622; that stretch reads KMSKS. ATP is bound at residue Lys-621.

Belongs to the class-I aminoacyl-tRNA synthetase family.

It is found in the cytoplasm. It catalyses the reaction tRNA(Leu) + L-leucine + ATP = L-leucyl-tRNA(Leu) + AMP + diphosphate. The protein is Leucine--tRNA ligase of Shewanella sp. (strain ANA-3).